Reading from the N-terminus, the 124-residue chain is MNLIQTLEAEQIAKLQEQKSIPDFRAGDTLKVGVRVVEGERIRIQFYEGVCIARSNKAIGSSFTVRKISFGEGVERVFPLYSPNVDSIEVVRRGVVRRAKLYYLRGRRGKAARIAERRDVRPSK.

It belongs to the bacterial ribosomal protein bL19 family.

In terms of biological role, this protein is located at the 30S-50S ribosomal subunit interface and may play a role in the structure and function of the aminoacyl-tRNA binding site. The polypeptide is Large ribosomal subunit protein bL19 (Zymomonas mobilis subsp. mobilis (strain ATCC 31821 / ZM4 / CP4)).